The primary structure comprises 252 residues: UPF0246 protein AM1_4276 (252 aa).

This sequence belongs to the UPF0246 family.

In Acaryochloris marina (strain MBIC 11017), this protein is UPF0246 protein AM1_4276.